Consider the following 264-residue polypeptide: tRNA pseudouridine synthase A (264 aa).

Aspartate 51 (nucleophile) is an active-site residue. Tyrosine 109 provides a ligand contact to substrate.

Belongs to the tRNA pseudouridine synthase TruA family. As to quaternary structure, homodimer.

It carries out the reaction uridine(38/39/40) in tRNA = pseudouridine(38/39/40) in tRNA. Its function is as follows. Formation of pseudouridine at positions 38, 39 and 40 in the anticodon stem and loop of transfer RNAs. This is tRNA pseudouridine synthase A from Vibrio vulnificus (strain CMCP6).